The chain runs to 538 residues: Beta-1,4-mannosyl-glycoprotein 4-beta-N-acetylglucosaminyltransferase (538 aa).

Over 1–7 (MKMRRYK) the chain is Cytoplasmic. Residues 8–23 (LFLMFCMAGLCLISFL) traverse the membrane as a helical; Signal-anchor for type II membrane protein segment. Residues 24–538 (HFFKTLSYVT…VRGKLDTAEG (515 aa)) lie on the Lumenal side of the membrane. Positions 120-161 (PGTRMLEKPSPGRTEEKTEVSEGSSARGPARRPMRHVLSSRE) are disordered. N-linked (GlcNAc...) asparagine glycans are attached at residues asparagine 245, asparagine 263, and asparagine 401. A disordered region spans residues 507–538 (REPKSTVEGGRQNQGSDGRSSAVRGKLDTAEG).

The protein belongs to the glycosyltransferase 17 family. As to quaternary structure, interacts with MGAT4D. Highly expressed in brain and kidney and to a much lesser extent in stomach, heart, intestine, uterus, testis, ovary and lung. Not present in spleen, liver and muscle. In brain, expressed in neurons of hippocampus.

The protein resides in the golgi apparatus membrane. It catalyses the reaction N(4)-{beta-D-GlcNAc-(1-&gt;2)-alpha-D-Man-(1-&gt;3)-[beta-D-GlcNAc-(1-&gt;2)-alpha-D-Man-(1-&gt;6)]-beta-D-Man-(1-&gt;4)-beta-D-GlcNAc-(1-&gt;4)-beta-D-GlcNAc}-L-asparaginyl-[protein] + UDP-N-acetyl-alpha-D-glucosamine = N(4)-{beta-D-GlcNAc-(1-&gt;2)-alpha-D-Man-(1-&gt;3)-[beta-D-GlcNAc-(1-&gt;4)]-[beta-D-GlcNAc-(1-&gt;2)-alpha-D-Man-(1-&gt;6)]-beta-D-Man-(1-&gt;4)-beta-D-GlcNAc-(1-&gt;4)-beta-D-GlcNAc}-L-asparaginyl-[protein] + UDP + H(+). It functions in the pathway protein modification; protein glycosylation. Functionally, it is involved in the regulation of the biosynthesis and biological function of glycoprotein oligosaccharides. Catalyzes the addition of N-acetylglucosamine in beta 1-4 linkage to the beta-linked mannose of the trimannosyl core of N-linked sugar chains, called bisecting N-acetylglucosamine (GlcNAc). It is one of the most important enzymes involved in the regulation of the biosynthesis of glycoprotein oligosaccharides. The addition of this bisecting GlcNAc residue alters not only the composition, but also the conformation of the N-glycan. The introduction of the bisecting GlcNAc residue results in the suppression of further processing and elongation of N-glycans, precluding the formation of beta-1,6 GlcNAc branching, catalyzed by MGAT5 since it is unable to use the bisected oligosaccharide as a substrate. Addition of bisecting N-acetylglucosamine to CDH1/E-cadherin modulates CDH1 cell membrane location. Inhibits NeuAc-alpha-2,3-Gal-beta-1,4-GlcNAc- formation which modulates sialylation levels and plays a role in cell migration regulation. In brain, addition of bisecting N-acetylglucosamine to BACE1 blocks its lysosomal targeting in response to oxidative stress and further degradation which increases its location to early endosome and the APP cleavage. This Mus musculus (Mouse) protein is Beta-1,4-mannosyl-glycoprotein 4-beta-N-acetylglucosaminyltransferase.